Here is a 200-residue protein sequence, read N- to C-terminus: Proteasome subunit beta 2 (200 aa).

The propeptide at 1 to 10 (MSDQLELMTG) is removed in mature form; by autocatalysis. The active-site Nucleophile is Thr-11.

Belongs to the peptidase T1B family. As to quaternary structure, the 20S proteasome core is composed of 14 alpha and 14 beta subunits that assemble into four stacked heptameric rings, resulting in a barrel-shaped structure. The two inner rings, each composed of seven catalytic beta subunits, are sandwiched by two outer rings, each composed of seven alpha subunits. The catalytic chamber with the active sites is on the inside of the barrel. Has a gated structure, the ends of the cylinder being occluded by the N-termini of the alpha-subunits. Is capped at one or both ends by the proteasome regulatory ATPase, PAN.

Its subcellular location is the cytoplasm. The enzyme catalyses Cleavage of peptide bonds with very broad specificity.. Its activity is regulated as follows. The formation of the proteasomal ATPase PAN-20S proteasome complex, via the docking of the C-termini of PAN into the intersubunit pockets in the alpha-rings, triggers opening of the gate for substrate entry. Interconversion between the open-gate and close-gate conformations leads to a dynamic regulation of the 20S proteasome proteolysis activity. Functionally, component of the proteasome core, a large protease complex with broad specificity involved in protein degradation. The protein is Proteasome subunit beta 2 of Caldivirga maquilingensis (strain ATCC 700844 / DSM 13496 / JCM 10307 / IC-167).